A 445-amino-acid chain; its full sequence is Glutamate--tRNA ligase 1 (445 aa).

A 'HIGH' region motif is present at residues 9–19; the sequence is PSPTGYLHVGN. Positions 238 to 242 match the 'KMSKS' region motif; sequence KISKR. Residue K241 participates in ATP binding.

Belongs to the class-I aminoacyl-tRNA synthetase family. Glutamate--tRNA ligase type 1 subfamily. In terms of assembly, monomer.

Its subcellular location is the cytoplasm. It catalyses the reaction tRNA(Glu) + L-glutamate + ATP = L-glutamyl-tRNA(Glu) + AMP + diphosphate. Catalyzes the attachment of glutamate to tRNA(Glu) in a two-step reaction: glutamate is first activated by ATP to form Glu-AMP and then transferred to the acceptor end of tRNA(Glu). The polypeptide is Glutamate--tRNA ligase 1 (Ehrlichia ruminantium (strain Gardel)).